The chain runs to 299 residues: Protein charybde (299 aa).

The disordered stretch occupies residues Leu-73–Gln-103. A compositionally biased stretch (gly residues) spans Ala-84–Val-96.

The protein belongs to the DDIT4 family.

The protein resides in the cytoplasm. Functionally, inhibits cell growth by regulating the Tor pathway upstream of the Tsc1-Tsc2 complex and downstream of Akt1. Acts as a cell death activator during head development. The sequence is that of Protein charybde (chrb) from Drosophila melanogaster (Fruit fly).